The following is a 280-amino-acid chain: Tryptophan 2,3-dioxygenase (280 aa).

Substrate-binding positions include Phe49 to His53, Tyr111, and Arg115. His238 contributes to the heme binding site. Residue Thr252 coordinates substrate.

It belongs to the tryptophan 2,3-dioxygenase family. Homotetramer. Requires heme as cofactor.

It carries out the reaction L-tryptophan + O2 = N-formyl-L-kynurenine. It functions in the pathway amino-acid degradation; L-tryptophan degradation via kynurenine pathway; L-kynurenine from L-tryptophan: step 1/2. Functionally, heme-dependent dioxygenase that catalyzes the oxidative cleavage of the L-tryptophan (L-Trp) pyrrole ring and converts L-tryptophan to N-formyl-L-kynurenine. Catalyzes the oxidative cleavage of the indole moiety. This chain is Tryptophan 2,3-dioxygenase, found in Geobacillus thermodenitrificans (strain NG80-2).